We begin with the raw amino-acid sequence, 304 residues long: Porphobilinogen deaminase (304 aa).

Cysteine 241 is subject to S-(dipyrrolylmethanemethyl)cysteine.

It belongs to the HMBS family. As to quaternary structure, monomer. Dipyrromethane is required as a cofactor.

The enzyme catalyses 4 porphobilinogen + H2O = hydroxymethylbilane + 4 NH4(+). Its pathway is porphyrin-containing compound metabolism; protoporphyrin-IX biosynthesis; coproporphyrinogen-III from 5-aminolevulinate: step 2/4. Tetrapolymerization of the monopyrrole PBG into the hydroxymethylbilane pre-uroporphyrinogen in several discrete steps. The polypeptide is Porphobilinogen deaminase (Ruthia magnifica subsp. Calyptogena magnifica).